Consider the following 376-residue polypeptide: uncharacterized protein (376 aa).

Residues 24-44 (YLSIISIISVFLLNSSIVYSC) traverse the membrane as a helical segment. His-251 contacts Zn(2+).

This sequence belongs to the peptidase M23B family. The cofactor is Zn(2+).

The protein resides in the cell membrane. This is an uncharacterized protein from Buchnera aphidicola subsp. Baizongia pistaciae (strain Bp).